Reading from the N-terminus, the 381-residue chain is Class E basic helix-loop-helix protein 22 (381 aa).

3 disordered regions span residues 30 to 94 (RLEA…GGGG), 135 to 154 (RGSV…DSDG), and 188 to 242 (HLHG…EQKA). Over residues 82–94 (GGGGGSAGSGGGG) the composition is skewed to gly residues. Over residues 198–225 (GGLGGGGGGGSSSGSSGGGGGSGSGSGG) the composition is skewed to gly residues. The bHLH domain occupies 242–296 (ALRLNINARERRRMHDLNDALDELRAVIPYAHSPSVRKLSKIATLLLAKNYILMQ).

In terms of assembly, interacts with PRDM8. In terms of tissue distribution, brain-specific, with the highest expression in the cerebellum.

It localises to the nucleus. Its function is as follows. Inhibits DNA binding of TCF3/E47 homodimers and TCF3 (E47)/NEUROD1 heterodimers and acts as a strong repressor of Neurod1 and Myod-responsive genes, probably by heterodimerization with class a basic helix-loop-helix factors. Despite the presence of an intact basic domain, does not bind to DNA. In the brain, may function as an area-specific transcription factor that regulates the postmitotic acquisition of area identities and elucidate the genetic hierarchy between progenitors and postmitotic neurons driving neocortical arealization. May be required for the survival of a specific population of inhibitory neurons in the superficial laminae of the spinal cord dorsal horn that may regulate pruritis. Seems to play a crucial role in the retinogenesis, in the specification of amacrine and bipolar subtypes. Forms with PRDM8 a transcriptional repressor complex controlling genes involved in neural development and neuronal differentiation. The chain is Class E basic helix-loop-helix protein 22 (BHLHE22) from Homo sapiens (Human).